Consider the following 256-residue polypeptide: Alcohol dehydrogenase (256 aa).

NAD(+) is bound at residue 12–41 (FVAGLGGIGLDTTKELLKRDLKNLVILDRI). Ser-140 lines the substrate pocket. Tyr-153 serves as the catalytic Proton acceptor.

The protein belongs to the short-chain dehydrogenases/reductases (SDR) family. In terms of assembly, homodimer.

The enzyme catalyses a primary alcohol + NAD(+) = an aldehyde + NADH + H(+). It catalyses the reaction a secondary alcohol + NAD(+) = a ketone + NADH + H(+). The polypeptide is Alcohol dehydrogenase (Drosophila ananassae (Fruit fly)).